A 795-amino-acid polypeptide reads, in one-letter code: RAS guanyl-releasing protein 1 (795 aa).

Basic and acidic residues predominate over residues 1 to 12; the sequence is MGTLGKAREAPR. The interval 1–37 is disordered; the sequence is MGTLGKAREAPRKPCHGSRAGPKARLEAKSTNSPLPA. The N-terminal Ras-GEF domain maps to 53 to 176; sequence LGHLAKGASL…HLIDTTQINS (124 aa). The segment at 57–110 is ras exchanger motif region; required for transforming activity; that stretch reads AKGASLDDLIDSCIQSFDADGNLCRNNQLLQVMLTMHRIIISSAELLQKVMNLY. Thr-184 carries the post-translational modification Phosphothreonine; by PKC. One can recognise a Ras-GEF domain in the interval 205-436; that stretch reads EPEELSEHLT…YELSYAREPR (232 aa). EF-hand domains follow at residues 470 to 505 and 506 to 532; these read HVQRMVDSVFKNYDLDQDGYISQEEFEKIAASFPFS and FCVMDKDREGLISRDEITAYFMRASSI. 5 residues coordinate Ca(2+): Asp-483, Asp-485, Asp-487, Tyr-489, and Glu-494. The segment at 541 to 591 adopts a Phorbol-ester/DAG-type zinc-finger fold; sequence PHNFQETTYLKPTFCDNCAGFLWGVIKQGYRCKDCGMNCHKQCKDLVVFEC. Ser-597 bears the Phosphoserine mark. The interval 686–694 is suppress the PT region-mediated translocation to plasma membrane; that stretch reads TPGHFVLSS. Residues 717-795 are PT region; mediates the BCR-dependent translocation to plasma membrane; the sequence is LVRKRAFVKW…LAQMDHGDSA (79 aa). Residues 738–779 adopt a coiled-coil conformation; that stretch reads ELHLRLRTYQELEQEINTLKADNDALKIQLKYAQKKIESLQL.

Belongs to the RASGRP family. In terms of assembly, homodimer. Forms a signaling complex with DGKZ and HRAS. Interacts with F-actin. Interacts with SKAP1. Detected in spleen and thymus. Expressed by mature thymocytes and to a lower extent by bone marrow-derived mast cells (at protein level). Detected in B-cells and keratinocytes (at protein level).

Its subcellular location is the cytoplasm. The protein resides in the cytosol. It is found in the cell membrane. It localises to the golgi apparatus membrane. The protein localises to the endoplasmic reticulum membrane. With respect to regulation, autoinhibited. Activated by diacylglycerol and calcium binding, which induces a conformational change releasing the autoinhibitory state. Regulated by DGKA. Regulated by DGKZ. Regulated by PLC gamma and F-actin polymerization. Its function is as follows. Functions as a calcium- and diacylglycerol (DAG)-regulated nucleotide exchange factor specifically activating Ras through the exchange of bound GDP for GTP. Activates the Erk/MAP kinase cascade. Regulates T-cell/B-cell development, homeostasis and differentiation by coupling T-lymphocyte/B-lymphocyte antigen receptors to Ras. Regulates NK cell cytotoxicity and ITAM-dependent cytokine production by activation of Ras-mediated ERK and JNK pathways. Functions in mast cell degranulation and cytokine secretion, regulating FcERI-evoked allergic responses. May also function in differentiation of other cell types. Proto-oncogene, which promotes T-cell lymphomagenesis when its expression is deregulated. This chain is RAS guanyl-releasing protein 1 (Rasgrp1), found in Mus musculus (Mouse).